The chain runs to 408 residues: Phosphoglycerate kinase (408 aa).

Substrate-binding positions include 22–24, R39, 60–63, R117, and R157; these read DIN and HQSR. Residues E332 and 358–361 contribute to the ATP site; that span reads GGHT.

It belongs to the phosphoglycerate kinase family. Monomer.

It is found in the cytoplasm. It carries out the reaction (2R)-3-phosphoglycerate + ATP = (2R)-3-phospho-glyceroyl phosphate + ADP. Its pathway is carbohydrate degradation; glycolysis; pyruvate from D-glyceraldehyde 3-phosphate: step 2/5. The protein is Phosphoglycerate kinase (pgk) of Thermoplasma acidophilum (strain ATCC 25905 / DSM 1728 / JCM 9062 / NBRC 15155 / AMRC-C165).